Reading from the N-terminus, the 144-residue chain is HTH-type transcriptional regulator LrpC (144 aa).

The HTH asnC-type domain occupies 3-64 (LDQIDLNIIE…EVDQKKLGLP (62 aa)). Positions 22–41 (MRELGRKIKLSPPSVTERVR) form a DNA-binding region, H-T-H motif.

Transcriptional regulator with a possible role in regulation of amino acid metabolism. Plays a role in the growth phase transition. This is HTH-type transcriptional regulator LrpC (lrpC) from Bacillus subtilis (strain 168).